A 193-amino-acid chain; its full sequence is Penicillin-binding protein activator LpoB (193 aa).

Residues 1 to 16 (MKRYLSVALAALVLTG) form the signal peptide. The N-palmitoyl cysteine moiety is linked to residue cysteine 17. A lipid anchor (S-diacylglycerol cysteine) is attached at cysteine 17. Positions 24–55 (EPTTPPVTIEPVTPPVPETPPPVDNVPPPPKM) are disordered. Residues 35-54 (VTPPVPETPPPVDNVPPPPK) are compositionally biased toward pro residues.

This sequence belongs to the LpoB family. In terms of assembly, interacts with PBP1b.

It localises to the cell outer membrane. In terms of biological role, regulator of peptidoglycan synthesis that is essential for the function of penicillin-binding protein 1B (PBP1b). This chain is Penicillin-binding protein activator LpoB, found in Yersinia enterocolitica serotype O:8 / biotype 1B (strain NCTC 13174 / 8081).